Reading from the N-terminus, the 200-residue chain is Eukaryotic translation initiation factor isoform 4E (200 aa).

MRNA-binding positions include 44-49, Lys76, and 94-95; these read QGVAWG and WE. Cys99 and Cys138 form a disulfide bridge. MRNA contacts are provided by residues 145–150 and 189–192; these read RRSQDK and KRER.

This sequence belongs to the eukaryotic initiation factor 4E family. EIF4F is a multi-subunit complex, the composition of which varies with external and internal environmental conditions. It is composed of at least EIF4A, EIF4E and EIF4G. EIF4E is also known to interact with other partners. In higher plants two isoforms of EIF4F have been identified, named isoform EIF4F and isoform EIF(iso)4F. Isoform EIF4F has subunits p220 and p26, whereas isoform EIF(iso)4F has subunits p82 and p28. As to quaternary structure, (Microbial infection) Interacts with viral genome-linked protein (VPg); this interaction is possible in susceptible hosts but impaired in resistant plants. Post-translationally, according to the redox status, the Cys-99-Cys-138 disulfide bridge may have a role in regulating protein function by affecting its ability to bind capped mRNA. As to expression, mostly expressed in roots and leaves, and, to a lower extent, in stems, flowers and immature green fruits.

It is found in the cytoplasm. It localises to the nucleus. In terms of biological role, component of the protein complex eIF4F, which is involved in the recognition of the mRNA cap, ATP-dependent unwinding of 5'-terminal secondary structure and recruitment of mRNA to the ribosome. Recognizes and binds the 7-methylguanosine-containing mRNA cap during an early step in the initiation of protein synthesis and facilitates ribosome binding by inducing the unwinding of the mRNAs secondary structures. Key component of recessive resistance to potyviruses. Functionally, (Microbial infection) Susceptibility host factor required for viral infection by recruiting viral RNAs to the host ribosomal complex via an interaction with viral genome-linked protein (VPg). The polypeptide is Eukaryotic translation initiation factor isoform 4E (Solanum lycopersicum (Tomato)).